Here is a 160-residue protein sequence, read N- to C-terminus: Serine-protein kinase RsbW (160 aa).

It belongs to the anti-sigma-factor family.

The catalysed reaction is L-seryl-[protein] + ATP = O-phospho-L-seryl-[protein] + ADP + H(+). The enzyme catalyses L-threonyl-[protein] + ATP = O-phospho-L-threonyl-[protein] + ADP + H(+). In terms of biological role, negative regulator of sigma-B activity. Phosphorylates and inactivates its specific antagonist protein, RsbV. Upon phosphorylation of RsbV, RsbW is released and binds to sigma-B, thereby blocking its ability to form an RNA polymerase holoenzyme (E-sigma-B). The sequence is that of Serine-protein kinase RsbW from Bacillus cereus (strain ZK / E33L).